Consider the following 150-residue polypeptide: UPF0506 protein SJCHGC09643 (150 aa).

Positions 1–18 (MNTCIQLLILCLVTVINS) are cleaved as a signal peptide. N-linked (GlcNAc...) asparagine glycans are attached at residues Asn20, Asn32, Asn48, and Asn110. 3 cysteine pairs are disulfide-bonded: Cys116-Cys130, Cys123-Cys134, and Cys129-Cys139.

Belongs to the UPF0506 family.

Its subcellular location is the secreted. The sequence is that of UPF0506 protein SJCHGC09643 from Schistosoma japonicum (Blood fluke).